A 275-amino-acid polypeptide reads, in one-letter code: Tumor necrosis factor-inducible gene 6 protein (275 aa).

A signal peptide spans 1–17 (MVVLLCLCVLLWEEAHG). Residues 36–129 (GVYHREARAG…SERWDAYCYN (94 aa)) enclose the Link domain. 3 disulfide bridges follow: C58–C127, C82–C103, and C135–C161. N-linked (GlcNAc...) asparagine glycosylation is present at N118. The 113-residue stretch at 135–247 (CGGVFTDPKR…GGFQIKYVTV (113 aa)) folds into the CUB domain. Ca(2+) is bound by residues E183, D191, D232, S234, and V235. A disulfide bridge links C188 with C210. A compositionally biased stretch (polar residues) spans 253–264 (SSQAKNTSTTGN). The tract at residues 253-275 (SSQAKNTSTTGNKKFLPGRFSHL) is disordered. N258 carries N-linked (GlcNAc...) asparagine glycosylation.

Interacts (via Link domain) with inter-alpha-inhibitor (I-alpha-I) component bikunin. Interacts with ITIH2/HC2; this interaction is required for transesterification of the HC to hyaluronan. Interacts (via Link and CUB domains) with ITIH1. Chondroitin sulfate may be required for the stability of the complex. Interacts (via Link domain) with various C-X-C and C-C chemokines including PF4, CXCL8, CXCL11, CXCL12, CCL2, CCL7, CCL19, CCL21, and CCL27; this interaction interferes with chemokine binding to glycosaminoglycans. Interacts (primarily via Link domain) with BMP2; this interaction is inhibited by hyaluronan. Interacts (via both Link and CUB domains) with TNFSF11. Interacts (via CUB domain) with FN1 (via type III repeats 9-14); this interaction enhances fibronectin fibril assembly. TNFAIP6 may act as a bridging molecule between FN1 and THBS1. In terms of tissue distribution, expressed in epiphyseal and metaphyseal bone marrow of both the femur and tibia (at protein level).

The protein localises to the secreted. Its function is as follows. Major regulator of extracellular matrix organization during tissue remodeling. Catalyzes the transfer of a heavy chain (HC) from inter-alpha-inhibitor (I-alpha-I) complex to hyaluronan. Cleaves the ester bond between the C-terminus of the HC and GalNAc residue of the chondroitin sulfate chain in I-alpha-I complex followed by transesterification of the HC to hyaluronan. In the process, potentiates the antiprotease function of I-alpha-I complex through release of free bikunin. Acts as a catalyst in the formation of hyaluronan-HC oligomers and hyaluronan-rich matrix surrounding the cumulus cell-oocyte complex, a necessary step for oocyte fertilization. Assembles hyaluronan in pericellular matrices that serve as platforms for receptor clustering and signaling. Enables binding of hyaluronan deposited on the surface of macrophages to LYVE1 on lymphatic endothelium and facilitates macrophage extravasation. Alters hyaluronan binding to functionally latent CD44 on vascular endothelium, switching CD44 into an active state that supports leukocyte rolling. Modulates the interaction of chemokines with extracellular matrix components and proteoglycans on endothelial cell surface, likely preventing chemokine gradient formation. In a negative feedback mechanism, may limit excessive neutrophil recruitment at inflammatory sites by antagonizing the association of CXCL8 with glycosaminoglycans on vascular endothelium. Has a role in osteogenesis and bone remodeling. Inhibits BMP2-dependent differentiation of mesenchymal stem cell to osteoblasts. Protects against bone erosion during inflammation by inhibiting TNFSF11/RANKL-dependent osteoclast activation. This Mus musculus (Mouse) protein is Tumor necrosis factor-inducible gene 6 protein (Tnfaip6).